We begin with the raw amino-acid sequence, 1252 residues long: Immunoglobulin superfamily DCC subclass member 4 (1252 aa).

The signal sequence occupies residues 1–22; sequence MARADTGRGLLVLTFCLLSARG. Over 23-956 the chain is Extracellular; it reads ELPLPQETTV…SDSLDVHAVT (934 aa). Ig-like domains follow at residues 27 to 136, 142 to 228, 241 to 329, and 334 to 420; these read PQET…VAVV, EDFS…ASLT, QDVV…AELR, and PAIS…APLA. Disulfide bonds link Cys55–Cys120 and Cys163–Cys211. A glycan (N-linked (GlcNAc...) asparagine) is linked at Asn88. An N-linked (GlcNAc...) asparagine glycan is attached at Asn251. 2 disulfide bridges follow: Cys264–Cys311 and Cys355–Cys404. Fibronectin type-III domains lie at 430 to 524, 526 to 622, 631 to 742, 751 to 844, and 849 to 944; these read APTR…TLDD, PSAA…TPGV, APAE…TPDL, PPAH…TLPD, and PPSD…TLQK. Residues 669 to 688 are disordered; sequence TEEEADGDRPPGGRGDQAWD. Residues 957-977 form a helical membrane-spanning segment; that stretch reads GIIVGVCLGLLCLLACMCAGL. Over 978-1252 the chain is Cytoplasmic; it reads RRSSHREALP…RAPVSSAQVP (275 aa). Residue Thr994 is modified to Phosphothreonine.

It belongs to the immunoglobulin superfamily. DCC family. As to expression, expressed in skeletal muscle, heart and brain. Brain expression is hippocampus-specific.

The protein localises to the cell membrane. The sequence is that of Immunoglobulin superfamily DCC subclass member 4 (Igdcc4) from Mus musculus (Mouse).